Here is a 566-residue protein sequence, read N- to C-terminus: Beta,beta-carotene 15,15'-dioxygenase (566 aa).

Fe cation-binding residues include H172, H237, H308, and H514. The disordered stretch occupies residues 530–566 (PAETQEVENSDHPTDPTAPELSHSENDFTAGHGGSSL).

Belongs to the carotenoid oxygenase family. It depends on Fe(2+) as a cofactor. In terms of tissue distribution, expressed in liver, kidney, small intestine and testis.

It localises to the cytoplasm. It is found in the cytosol. It carries out the reaction all-trans-beta-carotene + O2 = 2 all-trans-retinal. The protein operates within cofactor metabolism; retinol metabolism. In terms of biological role, symmetrically cleaves beta-carotene into two molecules of retinal using a dioxygenase mechanism. The sequence is that of Beta,beta-carotene 15,15'-dioxygenase from Mus musculus (Mouse).